The primary structure comprises 254 residues: 3-deoxy-manno-octulosonate cytidylyltransferase (254 aa).

It belongs to the KdsB family.

It localises to the cytoplasm. The enzyme catalyses 3-deoxy-alpha-D-manno-oct-2-ulosonate + CTP = CMP-3-deoxy-beta-D-manno-octulosonate + diphosphate. It functions in the pathway nucleotide-sugar biosynthesis; CMP-3-deoxy-D-manno-octulosonate biosynthesis; CMP-3-deoxy-D-manno-octulosonate from 3-deoxy-D-manno-octulosonate and CTP: step 1/1. It participates in bacterial outer membrane biogenesis; lipopolysaccharide biosynthesis. Its function is as follows. Activates KDO (a required 8-carbon sugar) for incorporation into bacterial lipopolysaccharide in Gram-negative bacteria. The protein is 3-deoxy-manno-octulosonate cytidylyltransferase of Pseudomonas syringae pv. syringae (strain B728a).